A 202-amino-acid chain; its full sequence is Imidazoleglycerol-phosphate dehydratase (202 aa).

It belongs to the imidazoleglycerol-phosphate dehydratase family.

The protein resides in the cytoplasm. It carries out the reaction D-erythro-1-(imidazol-4-yl)glycerol 3-phosphate = 3-(imidazol-4-yl)-2-oxopropyl phosphate + H2O. It functions in the pathway amino-acid biosynthesis; L-histidine biosynthesis; L-histidine from 5-phospho-alpha-D-ribose 1-diphosphate: step 6/9. This Brucella suis (strain ATCC 23445 / NCTC 10510) protein is Imidazoleglycerol-phosphate dehydratase.